We begin with the raw amino-acid sequence, 77 residues long: Conotoxin Mr8.2 (77 aa).

The N-terminal stretch at 1 to 16 (MLRLITAAVLVSACLA) is a signal peptide. A propeptide spanning residues 17-32 (YPQKKRTPPQTRPTSR) is cleaved from the precursor.

Belongs to the conotoxin B2 family. Contains 5 disulfide bonds. As to expression, expressed by the venom duct.

The protein localises to the secreted. The polypeptide is Conotoxin Mr8.2 (Conus marmoreus (Marble cone)).